Reading from the N-terminus, the 279-residue chain is Tryptophan synthase alpha chain (279 aa).

Residues E50 and D61 each act as proton acceptor in the active site.

It belongs to the TrpA family. In terms of assembly, tetramer of two alpha and two beta chains.

It carries out the reaction (1S,2R)-1-C-(indol-3-yl)glycerol 3-phosphate + L-serine = D-glyceraldehyde 3-phosphate + L-tryptophan + H2O. It participates in amino-acid biosynthesis; L-tryptophan biosynthesis; L-tryptophan from chorismate: step 5/5. In terms of biological role, the alpha subunit is responsible for the aldol cleavage of indoleglycerol phosphate to indole and glyceraldehyde 3-phosphate. The chain is Tryptophan synthase alpha chain from Rhizobium etli (strain ATCC 51251 / DSM 11541 / JCM 21823 / NBRC 15573 / CFN 42).